Reading from the N-terminus, the 439-residue chain is Mitochondrial distribution and morphology protein 10 (439 aa).

The tract at residues 275–305 (LPDATPPSFQVPSSSSSSSNPVSPSTSQPPT) is disordered. Positions 280 to 305 (PPSFQVPSSSSSSSNPVSPSTSQPPT) are enriched in low complexity.

Belongs to the MDM10 family. As to quaternary structure, component of the ER-mitochondria encounter structure (ERMES) or MDM complex, composed of MMM1, MDM10, MDM12 and MDM34. Associates with the mitochondrial outer membrane sorting assembly machinery SAM(core) complex.

Its subcellular location is the mitochondrion outer membrane. Component of the ERMES/MDM complex, which serves as a molecular tether to connect the endoplasmic reticulum and mitochondria. Components of this complex are involved in the control of mitochondrial shape and protein biogenesis and may function in phospholipid exchange. MDM10 is involved in the late assembly steps of the general translocase of the mitochondrial outer membrane (TOM complex). Functions in the TOM40-specific route of the assembly of outer membrane beta-barrel proteins, including the association of TOM40 with the receptor TOM22 and small TOM proteins. Can associate with the SAM(core) complex as well as the MDM12-MMM1 complex, both involved in late steps of the major beta-barrel assembly pathway, that is responsible for biogenesis of all outer membrane beta-barrel proteins. May act as a switch that shuttles between both complexes and channels precursor proteins into the TOM40-specific pathway. Plays a role in mitochondrial morphology and in the inheritance of mitochondria. The chain is Mitochondrial distribution and morphology protein 10 from Laccaria bicolor (strain S238N-H82 / ATCC MYA-4686) (Bicoloured deceiver).